A 239-amino-acid polypeptide reads, in one-letter code: Beta-glucanase (239 aa).

The signal sequence occupies residues 1 to 25 (MKRVLLILVTGLFMSLCGITSSVSA). One can recognise a GH16 domain in the interval 26-239 (QTGGSFFEPF…HYDWMRYRKK (214 aa)). C57 and C86 are disulfide-bonded. E134 acts as the Nucleophile in catalysis.

The protein belongs to the glycosyl hydrolase 16 family.

The enzyme catalyses Hydrolysis of (1-&gt;4)-beta-D-glucosidic linkages in beta-D-glucans containing (1-&gt;3)- and (1-&gt;4)-bonds.. The protein is Beta-glucanase (bglA) of Bacillus amyloliquefaciens (Bacillus velezensis).